A 223-amino-acid polypeptide reads, in one-letter code: Cytidylate kinase (223 aa).

Residues 1–23 (MSTSPLVIAIDGPSGSGKSSTSR) are disordered. ATP is bound at residue 12-20 (GPSGSGKSS).

It belongs to the cytidylate kinase family. Type 1 subfamily.

Its subcellular location is the cytoplasm. It catalyses the reaction CMP + ATP = CDP + ADP. The enzyme catalyses dCMP + ATP = dCDP + ADP. The sequence is that of Cytidylate kinase from Cutibacterium acnes (strain DSM 16379 / KPA171202) (Propionibacterium acnes).